Here is a 64-residue protein sequence, read N- to C-terminus: Temporin-ALf (64 aa).

The first 22 residues, Met1–Cys22, serve as a signal peptide directing secretion. The propeptide occupies Glu23–Arg46. Leu62 bears the Leucine amide mark.

As to expression, expressed by the skin glands.

The protein localises to the secreted. Antimicrobial peptide with activity against Gram-positive and Gram-negative bacteria and against fungi. Has been tested against S.aureus (MIC=2.5 ug/mL), B.pumilus (MIC=5.0 ug/mL), B.cereus (MIC=30.0 ug/mL), E.coli (MIC=2.5 ug/mL), B.dysenteriae (MIC=5.0 ug/mL), A.cacoaceticus (MIC=30.0 ug/mL), P.aeruginosa (MIC=5.0 ug/mL) and C.albicans (MIC=2.5 ug/mL). Also shows a weak hemolytic activity. The protein is Temporin-ALf of Amolops loloensis (Lolokou Sucker Frog).